We begin with the raw amino-acid sequence, 517 residues long: Alpha,alpha-trehalose-phosphate synthase [UDP-forming] 1 (517 aa).

D-glucose 6-phosphate contacts are provided by tyrosine 98 and aspartate 152. Arginine 288 and lysine 293 together coordinate UDP. UDP-alpha-D-glucose contacts are provided by arginine 288 and lysine 293. Arginine 326 lines the D-glucose 6-phosphate pocket. Aspartate 387–glutamate 395 is a binding site for UDP-alpha-D-glucose. Leucine 391 to glutamate 395 is a UDP binding site. The disordered stretch occupies residues phenylalanine 486–glutamine 517. A compositionally biased stretch (polar residues) spans phenylalanine 493–glutamine 517.

The protein belongs to the glycosyltransferase 20 family.

It catalyses the reaction D-glucose 6-phosphate + UDP-alpha-D-glucose = alpha,alpha-trehalose 6-phosphate + UDP + H(+). It functions in the pathway carbohydrate biosynthesis. In terms of biological role, synthase catalytic subunit of the trehalose synthase complex that catalyzes the production of trehalose from glucose-6-phosphate and UDP-alpha-D-glucose in a two step process. This chain is Alpha,alpha-trehalose-phosphate synthase [UDP-forming] 1, found in Aspergillus niger.